Consider the following 151-residue polypeptide: Deoxyuridine 5'-triphosphate nucleotidohydrolase (151 aa).

Substrate is bound by residues Arg-70–Gly-72, Asn-83, Leu-87–Asp-89, and Met-97.

Belongs to the dUTPase family. Mg(2+) serves as cofactor.

It catalyses the reaction dUTP + H2O = dUMP + diphosphate + H(+). It functions in the pathway pyrimidine metabolism; dUMP biosynthesis; dUMP from dCTP (dUTP route): step 2/2. In terms of biological role, this enzyme is involved in nucleotide metabolism: it produces dUMP, the immediate precursor of thymidine nucleotides and it decreases the intracellular concentration of dUTP so that uracil cannot be incorporated into DNA. The chain is Deoxyuridine 5'-triphosphate nucleotidohydrolase from Tolumonas auensis (strain DSM 9187 / NBRC 110442 / TA 4).